Here is a 503-residue protein sequence, read N- to C-terminus: Probable cytosol aminopeptidase (503 aa).

The Mn(2+) site is built by K274 and D279. The active site involves K286. Mn(2+) contacts are provided by D297, D356, and E358. R360 is an active-site residue.

It belongs to the peptidase M17 family. Requires Mn(2+) as cofactor.

The protein resides in the cytoplasm. The catalysed reaction is Release of an N-terminal amino acid, Xaa-|-Yaa-, in which Xaa is preferably Leu, but may be other amino acids including Pro although not Arg or Lys, and Yaa may be Pro. Amino acid amides and methyl esters are also readily hydrolyzed, but rates on arylamides are exceedingly low.. It catalyses the reaction Release of an N-terminal amino acid, preferentially leucine, but not glutamic or aspartic acids.. Functionally, presumably involved in the processing and regular turnover of intracellular proteins. Catalyzes the removal of unsubstituted N-terminal amino acids from various peptides. The sequence is that of Probable cytosol aminopeptidase from Burkholderia thailandensis (strain ATCC 700388 / DSM 13276 / CCUG 48851 / CIP 106301 / E264).